Reading from the N-terminus, the 490-residue chain is Cis-aconitate decarboxylase (490 aa).

This sequence belongs to the PrpD family. Homodimer.

It is found in the mitochondrion. The catalysed reaction is cis-aconitate + H(+) = itaconate + CO2. Functionally, involved in the production of itaconic acid, a soluble unsaturated dicarboxylic acid mainly produced from sugars. The chain is Cis-aconitate decarboxylase (cad1) from Aspergillus terreus (strain NIH 2624 / FGSC A1156).